A 411-amino-acid chain; its full sequence is Metal-binding regulatory protein cuf1 (411 aa).

A DNA-binding region (copper-fist) is located at residues 1 to 40; that stretch reads MVVINNVKMACMKCIRGHRSSTCKHNDRELFPIRPKGRPI. 4 residues coordinate Zn(2+): C11, C14, C23, and H25. Residues 63–92 form a disordered region; that stretch reads SRKKGSKCSTSSTTDLDSSSASNSSCSIPS. Residues 69–92 show a composition bias toward low complexity; the sequence is KCSTSSTTDLDSSSASNSSCSIPS.

The protein resides in the cytoplasm. It is found in the nucleus. Its function is as follows. Copper-sensing transcription factor that regulates iron uptake genes. Under copper starvation conditions activates the transcription of the copper transport genes, ctr4, ctr5 and ctr6. In Schizosaccharomyces pombe (strain 972 / ATCC 24843) (Fission yeast), this protein is Metal-binding regulatory protein cuf1 (cuf1).